A 66-amino-acid chain; its full sequence is Cold shock protein CspC (66 aa).

The 60-residue stretch at 4–63 folds into the CSD domain; the sequence is GTVKWFNAEKGFGFIERENGDDVFVHFSAIQSDGFKSLDEGQKVSFDVEQGARGAQAANV.

It localises to the cytoplasm. The sequence is that of Cold shock protein CspC (cspC) from Bacillus subtilis (strain 168).